Reading from the N-terminus, the 129-residue chain is Small ribosomal subunit protein uS11 (129 aa).

Belongs to the universal ribosomal protein uS11 family. As to quaternary structure, part of the 30S ribosomal subunit. Interacts with proteins S7 and S18. Binds to IF-3.

In terms of biological role, located on the platform of the 30S subunit, it bridges several disparate RNA helices of the 16S rRNA. Forms part of the Shine-Dalgarno cleft in the 70S ribosome. This chain is Small ribosomal subunit protein uS11, found in Levilactobacillus brevis (strain ATCC 367 / BCRC 12310 / CIP 105137 / JCM 1170 / LMG 11437 / NCIMB 947 / NCTC 947) (Lactobacillus brevis).